Reading from the N-terminus, the 816-residue chain is Glycerol-3-phosphate acyltransferase (816 aa).

The HXXXXD motif signature appears at 298-303 (CHRSHM).

This sequence belongs to the GPAT/DAPAT family.

The protein localises to the cell membrane. The enzyme catalyses sn-glycerol 3-phosphate + an acyl-CoA = a 1-acyl-sn-glycero-3-phosphate + CoA. It participates in phospholipid metabolism; CDP-diacylglycerol biosynthesis; CDP-diacylglycerol from sn-glycerol 3-phosphate: step 1/3. The sequence is that of Glycerol-3-phosphate acyltransferase from Hamiltonella defensa subsp. Acyrthosiphon pisum (strain 5AT).